Reading from the N-terminus, the 38-residue chain is Odorant-binding protein 2 (38 aa).

It belongs to the calycin superfamily. Lipocalin family. Nasal mucosa.

The protein localises to the secreted. The protein resides in the extracellular space. In terms of biological role, this soluble protein may play a specific role in odor discrimination and perception. In Hystrix cristata (North African crested porcupine), this protein is Odorant-binding protein 2.